The sequence spans 238 residues: uncharacterized protein (238 aa).

Disordered stretches follow at residues 123 to 167 and 180 to 238; these read FRQG…VHGG and SAMG…AKRR. Residues 152–161 are compositionally biased toward low complexity; sequence SGHSPSPGRH. Over residues 207 to 238 the composition is skewed to basic residues; sequence HRGHGHRFRLLAPRSRPRQRRGGGSRAAAKRR.

Belongs to the PNP/MTAP phosphorylase family.

This is an uncharacterized protein from Rhodospirillum rubrum.